The chain runs to 108 residues: Peptidyl-prolyl cis-trans isomerase FKBP1B (108 aa).

The PPIase FKBP-type domain occupies G20–E108.

It belongs to the FKBP-type PPIase family. FKBP1 subfamily. In terms of assembly, identified in a complex composed of RYR2, FKBP1B, PKA catalytic subunit, PRKAR2A, AKAP6, and the protein phosphatases PP2A and PP1. Interacts directly with RYR2. In terms of tissue distribution, detected in heart muscle (at protein level). Ubiquitous.

Its subcellular location is the cytoplasm. It is found in the sarcoplasmic reticulum. It carries out the reaction [protein]-peptidylproline (omega=180) = [protein]-peptidylproline (omega=0). Its activity is regulated as follows. Inhibited by both FK506 and rapamycin. Has the potential to contribute to the immunosuppressive and toxic effects of FK506 and rapamycin. PPIases accelerate the folding of proteins. It catalyzes the cis-trans isomerization of proline imidic peptide bonds in oligopeptides. The protein is Peptidyl-prolyl cis-trans isomerase FKBP1B (Fkbp1b) of Rattus norvegicus (Rat).